A 415-amino-acid chain; its full sequence is MAEIPLYFVDLQDDLDDYGFEDYGTDCDNMRVTAFLDIPGQDNLPPLTRLEKYAFSENTFNRQIIARGLLDIFRDFGNNEEDFLTVMEIVVRLSEDAEPTVRTELMEQIPPIAIFLQENRSNFPVVLSEYLIPIVVRYLTDPNNQIICKMASMLSKSTVERLLLPRFCELCGDRKLFQVRKVCAANFGDICHAVGQEATEKFLIPKFFELCSDAVWGMRKACAECFTAVSHSSSPGVRRTQLFPLFIRLVSDPCRWVHQAAFQSLGPFTSTFANPSRAGLYLREDGALSIWPLTQDLDSGFASGSPAPSSGGNTSPASLTRSAKPVRSEPELPVEGTSAKTSDCPHSSSSSDGPAESPVESCVSAGAEWTRVSPETSACSKLSDMNDLPISSYPGSDSWACPGNTEDVFSHFLYW.

HEAT repeat units follow at residues 86-124, 163-202, 203-241, and 242-280; these read VMEI…SNFP, LLPR…TEKF, LIPK…RRTQ, and LFPL…RAGL. The segment covering 301 to 318 has biased composition (low complexity); it reads FASGSPAPSSGGNTSPAS. Residues 301–362 form a disordered region; sequence FASGSPAPSS…GPAESPVESC (62 aa).

Its function is as follows. May be a regulatory subunit of serine/threonine-protein phosphatase 4. This is Putative serine/threonine-protein phosphatase 4 regulatory subunit 1-like (PPP4R1L) from Homo sapiens (Human).